A 314-amino-acid chain; its full sequence is uncharacterized protein (314 aa).

2 stretches are compositionally biased toward basic residues: residues 1-16 and 49-65; these read MAGNSKRRGAVRKAGT and AAKRAAKAAKQQQRRPA. Residues 1–73 are disordered; it reads MAGNSKRRGA…PARKTDETEL (73 aa). S-adenosyl-L-methionine contacts are provided by glycine 266, isoleucine 286, and leucine 295.

This sequence belongs to the class IV-like SAM-binding methyltransferase superfamily. RNA methyltransferase TrmH family.

This is an uncharacterized protein from Mycobacterium sp. (strain KMS).